The chain runs to 546 residues: Zinc metalloproteinase nas-9 (546 aa).

Residues 1–14 form the signal peptide; the sequence is MIFLLFVVFPFVYA. Positions 15–300 are excised as a propeptide; sequence QLLPELLAGF…GGGGGGRVPR (286 aa). N248 is a glycosylation site (N-linked (GlcNAc...) asparagine). The region spanning 308–507 is the Peptidase M12A domain; the sequence is SAVQKWDIWK…IRLLKKMYCR (200 aa). Intrachain disulfides connect C347-C506, C372-C392, C510-C546, C517-C539, and C526-C543. A Zn(2+)-binding site is contributed by H401. E402 is a catalytic residue. The Zn(2+) site is built by H405 and H411. Residues 510–546 enclose the ShKT domain; sequence CDDQNVHCGTWALHGYCKMKEQMKWMNENCKASCDKC.

Zn(2+) is required as a cofactor. In terms of tissue distribution, expressed in hypodermis, uterus and spermatheca.

It is found in the secreted. Metalloprotease. The protein is Zinc metalloproteinase nas-9 (nas-9) of Caenorhabditis elegans.